We begin with the raw amino-acid sequence, 178 residues long: Large ribosomal subunit protein uL16 (178 aa).

This sequence belongs to the universal ribosomal protein uL16 family.

In Saccharolobus islandicus (strain Y.N.15.51 / Yellowstone #2) (Sulfolobus islandicus), this protein is Large ribosomal subunit protein uL16.